The following is a 118-amino-acid chain: V-type proton ATPase subunit G 3 (118 aa).

A coiled-coil region spans residues 3-54 (SQSQGIQQLLQAEKRAKDKLEEAKKRKNKRLRQAKEEATADIDQYRLKREAD). The segment at 19–39 (KDKLEEAKKRKNKRLRQAKEE) is disordered.

The protein belongs to the V-ATPase G subunit family. In terms of assembly, V-ATPase is a heteromultimeric enzyme made up of two complexes: the ATP-hydrolytic V1 complex and the proton translocation V0 complex. The V1 complex consists of three catalytic AB heterodimers that form a heterohexamer, three peripheral stalks each consisting of EG heterodimers, one central rotor including subunits D and F, and the regulatory subunits C and H. The proton translocation complex V0 consists of the proton transport subunit a, a ring of proteolipid subunits c9c'', rotary subunit d, subunits e and f, and two accessory subunits.

Functionally, subunit of the V1 complex of vacuolar(H+)-ATPase (V-ATPase), a multisubunit enzyme composed of a peripheral complex (V1) that hydrolyzes ATP and a membrane integral complex (V0) that translocates protons. V-ATPase is responsible for acidifying and maintaining the pH of intracellular compartments and in some cell types, is targeted to the plasma membrane, where it is responsible for acidifying the extracellular environment. The chain is V-type proton ATPase subunit G 3 (atp6v1g3) from Xenopus laevis (African clawed frog).